Reading from the N-terminus, the 391-residue chain is Acetylgalactosaminyl-O-glycosyl-glycoprotein beta-1,3-N-acetylglucosaminyltransferase (391 aa).

Topologically, residues 1–11 (MALPSSRRFKS) are cytoplasmic. The chain crosses the membrane as a helical; Signal-anchor for type II membrane protein span at residues 12-32 (PTTLAFFLVGVTLVVLNQWFL). Over 33–391 (QEHRQEKAKG…TAGEQNPDAH (359 aa)) the chain is Lumenal. 2 N-linked (GlcNAc...) asparagine glycosylation sites follow: asparagine 68 and asparagine 191.

It belongs to the glycosyltransferase 31 family.

The protein resides in the golgi apparatus membrane. The catalysed reaction is a 3-O-[N-acetyl-alpha-D-galactosaminyl]-L-threonyl-[protein] + UDP-N-acetyl-alpha-D-glucosamine = a 3-O-[N-acetyl-beta-D-glucosaminyl-(1-&gt;3)-N-acetyl-alpha-D-galactosaminyl]-L-threonyl-[protein] + UDP + H(+). It carries out the reaction a 3-O-[N-acetyl-alpha-D-galactosaminyl]-L-seryl-[protein] + UDP-N-acetyl-alpha-D-glucosamine = 3-O-[N-acetyl-beta-D-glucosaminyl-(1-&gt;3)-N-acetyl-alpha-D-galactosaminyl]-L-seryl-[protein] + UDP + H(+). It functions in the pathway protein modification; protein glycosylation. Functionally, beta-1,3-N-acetylglucosaminyltransferase that synthesizes the core 3 structure of the O-glycan, an important precursor in the biosynthesis of mucin-type glycoproteins. Plays an important role in the synthesis of mucin-type O-glycans in digestive organs. The protein is Acetylgalactosaminyl-O-glycosyl-glycoprotein beta-1,3-N-acetylglucosaminyltransferase (B3gnt6) of Mus musculus (Mouse).